A 358-amino-acid chain; its full sequence is 3-dehydroquinate synthase (358 aa).

NAD(+)-binding positions include 70–75, 104–108, 128–129, Lys141, Lys150, and 168–171; these read DGEQFK, GVIGD, TT, and CLHT. Zn(2+) is bound by residues Glu183, His246, and His263.

The protein belongs to the sugar phosphate cyclases superfamily. Dehydroquinate synthase family. Requires Co(2+) as cofactor. The cofactor is Zn(2+). NAD(+) is required as a cofactor.

The protein localises to the cytoplasm. It catalyses the reaction 7-phospho-2-dehydro-3-deoxy-D-arabino-heptonate = 3-dehydroquinate + phosphate. It functions in the pathway metabolic intermediate biosynthesis; chorismate biosynthesis; chorismate from D-erythrose 4-phosphate and phosphoenolpyruvate: step 2/7. Its function is as follows. Catalyzes the conversion of 3-deoxy-D-arabino-heptulosonate 7-phosphate (DAHP) to dehydroquinate (DHQ). This chain is 3-dehydroquinate synthase, found in Shewanella baltica (strain OS155 / ATCC BAA-1091).